The sequence spans 417 residues: Hydroxysteroid dehydrogenase-like protein 2 (417 aa).

NADP(+)-binding positions include 17–23 (GASRGIG), lysine 42, and aspartate 74. Tyrosine 168 serves as the catalytic Proton acceptor. Lysine 172 lines the NADP(+) pocket. An SCP2 domain is found at 306–414 (ASPLQETFKA…KLEKILGQMN (109 aa)).

Belongs to the short-chain dehydrogenases/reductases (SDR) family.

The protein localises to the peroxisome. It is found in the mitochondrion. Has apparently no steroid dehydrogenase activity. Might act as a metabolic regulator that affects systemic adaptation to nutritional cues. In Xenopus laevis (African clawed frog), this protein is Hydroxysteroid dehydrogenase-like protein 2 (hsdl2).